Consider the following 314-residue polypeptide: Acetyl-coenzyme A carboxylase carboxyl transferase subunit beta (314 aa).

In terms of domain architecture, CoA carboxyltransferase N-terminal spans 25–294 (VWTKCDSCSQ…PGTKPIVAEF (270 aa)). Zn(2+) contacts are provided by Cys-29, Cys-32, Cys-48, and Cys-51. The C4-type zinc finger occupies 29–51 (CDSCSQVLYRAELERNLEVCPKC).

This sequence belongs to the AccD/PCCB family. As to quaternary structure, acetyl-CoA carboxylase is a heterohexamer composed of biotin carboxyl carrier protein (AccB), biotin carboxylase (AccC) and two subunits each of ACCase subunit alpha (AccA) and ACCase subunit beta (AccD). Requires Zn(2+) as cofactor.

It is found in the cytoplasm. It carries out the reaction N(6)-carboxybiotinyl-L-lysyl-[protein] + acetyl-CoA = N(6)-biotinyl-L-lysyl-[protein] + malonyl-CoA. The protein operates within lipid metabolism; malonyl-CoA biosynthesis; malonyl-CoA from acetyl-CoA: step 1/1. Functionally, component of the acetyl coenzyme A carboxylase (ACC) complex. Biotin carboxylase (BC) catalyzes the carboxylation of biotin on its carrier protein (BCCP) and then the CO(2) group is transferred by the transcarboxylase to acetyl-CoA to form malonyl-CoA. The sequence is that of Acetyl-coenzyme A carboxylase carboxyl transferase subunit beta from Photorhabdus laumondii subsp. laumondii (strain DSM 15139 / CIP 105565 / TT01) (Photorhabdus luminescens subsp. laumondii).